A 586-amino-acid chain; its full sequence is Eukaryotic translation initiation factor 3 subunit D (586 aa).

The segment at 102-176 (SAKRTFGRGG…DKPQRTREPS (75 aa)) is disordered. Over residues 162–174 (GWKDYDKPQRTRE) the composition is skewed to basic and acidic residues. Residues 301–315 (SLDLVTVNENAADAP) form an RNA gate region. Residues 567–586 (EEEEEVAAEEQEAAEEEAEE) form a disordered region.

Belongs to the eIF-3 subunit D family. Component of the eukaryotic translation initiation factor 3 (eIF-3) complex.

Its subcellular location is the cytoplasm. Its function is as follows. mRNA cap-binding component of the eukaryotic translation initiation factor 3 (eIF-3) complex, which is involved in protein synthesis of a specialized repertoire of mRNAs and, together with other initiation factors, stimulates binding of mRNA and methionyl-tRNAi to the 40S ribosome. The eIF-3 complex specifically targets and initiates translation of a subset of mRNAs involved in cell proliferation. In the eIF-3 complex, eif3d specifically recognizes and binds the 7-methylguanosine cap of a subset of mRNAs. In Aspergillus niger (strain ATCC MYA-4892 / CBS 513.88 / FGSC A1513), this protein is Eukaryotic translation initiation factor 3 subunit D.